The sequence spans 137 residues: Structural protein A137R (137 aa).

The protein belongs to the asfivirus A137R family. As to quaternary structure, interacts with host TBK1.

It localises to the virion. It is found in the host cytoplasm. Its function is as follows. Plays a role in the inhibition of the host innate immune response. Mechanistically, promotes the autophagy-mediated lysosomal degradation of host TBK1 and affects IRF3 nuclear translocation to block type I IFN production. The sequence is that of Structural protein A137R from Ornithodoros (relapsing fever ticks).